Here is a 373-residue protein sequence, read N- to C-terminus: 4-hydroxy-3-methylbut-2-en-1-yl diphosphate synthase (flavodoxin) (373 aa).

The [4Fe-4S] cluster site is built by Cys-270, Cys-273, Cys-305, and Glu-312.

Belongs to the IspG family. Requires [4Fe-4S] cluster as cofactor.

It catalyses the reaction (2E)-4-hydroxy-3-methylbut-2-enyl diphosphate + oxidized [flavodoxin] + H2O + 2 H(+) = 2-C-methyl-D-erythritol 2,4-cyclic diphosphate + reduced [flavodoxin]. It participates in isoprenoid biosynthesis; isopentenyl diphosphate biosynthesis via DXP pathway; isopentenyl diphosphate from 1-deoxy-D-xylulose 5-phosphate: step 5/6. Converts 2C-methyl-D-erythritol 2,4-cyclodiphosphate (ME-2,4cPP) into 1-hydroxy-2-methyl-2-(E)-butenyl 4-diphosphate. The protein is 4-hydroxy-3-methylbut-2-en-1-yl diphosphate synthase (flavodoxin) of Serratia proteamaculans (strain 568).